Reading from the N-terminus, the 152-residue chain is Xanthine-guanine phosphoribosyltransferase (152 aa).

Residues 37 to 38 (RG), Arg-69, and 88 to 96 (DDLVDTGGT) contribute to the 5-phospho-alpha-D-ribose 1-diphosphate site. Arg-69 is a GMP binding site. Asp-89 serves as a coordination point for Mg(2+). Guanine is bound by residues Asp-92 and Ile-135. Residues Asp-92 and Ile-135 each contribute to the xanthine site. GMP is bound by residues 92 to 96 (DTGGT) and 134 to 135 (WI).

It belongs to the purine/pyrimidine phosphoribosyltransferase family. XGPT subfamily. Homotetramer. It depends on Mg(2+) as a cofactor.

It is found in the cell inner membrane. It carries out the reaction GMP + diphosphate = guanine + 5-phospho-alpha-D-ribose 1-diphosphate. The enzyme catalyses XMP + diphosphate = xanthine + 5-phospho-alpha-D-ribose 1-diphosphate. The catalysed reaction is IMP + diphosphate = hypoxanthine + 5-phospho-alpha-D-ribose 1-diphosphate. Its pathway is purine metabolism; GMP biosynthesis via salvage pathway; GMP from guanine: step 1/1. It functions in the pathway purine metabolism; XMP biosynthesis via salvage pathway; XMP from xanthine: step 1/1. Functionally, purine salvage pathway enzyme that catalyzes the transfer of the ribosyl-5-phosphate group from 5-phospho-alpha-D-ribose 1-diphosphate (PRPP) to the N9 position of the 6-oxopurines guanine and xanthine to form the corresponding ribonucleotides GMP (guanosine 5'-monophosphate) and XMP (xanthosine 5'-monophosphate), with the release of PPi. To a lesser extent, also acts on hypoxanthine. The chain is Xanthine-guanine phosphoribosyltransferase from Photobacterium profundum (strain SS9).